The following is a 35-amino-acid chain: Photosystem II reaction center protein M (35 aa).

The helical transmembrane segment at 5–25 threads the bilayer; it reads ILGLIATALFILIPTSFLIIL.

The protein belongs to the PsbM family. In terms of assembly, PSII is composed of 1 copy each of membrane proteins PsbA, PsbB, PsbC, PsbD, PsbE, PsbF, PsbH, PsbI, PsbJ, PsbK, PsbL, PsbM, PsbT, PsbX, PsbY, PsbZ, Psb30/Ycf12, at least 3 peripheral proteins of the oxygen-evolving complex and a large number of cofactors. It forms dimeric complexes.

The protein localises to the plastid. The protein resides in the chloroplast thylakoid membrane. One of the components of the core complex of photosystem II (PSII). PSII is a light-driven water:plastoquinone oxidoreductase that uses light energy to abstract electrons from H(2)O, generating O(2) and a proton gradient subsequently used for ATP formation. It consists of a core antenna complex that captures photons, and an electron transfer chain that converts photonic excitation into a charge separation. This subunit is found at the monomer-monomer interface. The polypeptide is Photosystem II reaction center protein M (Oltmannsiellopsis viridis (Marine flagellate)).